A 597-amino-acid chain; its full sequence is Fructan 1-exohydrolase w1 (597 aa).

An N-terminal signal peptide occupies residues 1–20 (MAQAWAFLLPVLVFGSYVTS). Asp-76 is an active-site residue. Asn-169, Asn-237, and Asn-249 each carry an N-linked (GlcNAc...) asparagine glycan. Cys-447 and Cys-493 are disulfide-bonded. Asn-568 carries N-linked (GlcNAc...) asparagine glycosylation.

Belongs to the glycosyl hydrolase 32 family.

The catalysed reaction is Hydrolysis of terminal, non-reducing (2-&gt;1)-linked beta-D-fructofuranose residues in fructans.. Its activity is regulated as follows. Inhibited by sucrose. Functionally, hydrolyzes inulin-type beta-(2,1)-fructans and beta-(2,1)-linkages in branched fructans. Has low activity against beta-(2,6)-linked fructans. May play a role as a beta-(2,1)-trimmer during graminan biosynthesis. This chain is Fructan 1-exohydrolase w1, found in Triticum aestivum (Wheat).